We begin with the raw amino-acid sequence, 563 residues long: Serine carboxypeptidase S10 family member 2 (563 aa).

A signal peptide spans 1 to 23 (MNIKIILLSIILIIQLLLLNNNG). Residues 24–529 (GIVESKINFS…VPLTLGAWIG (506 aa)) lie on the Extracellular side of the membrane. 4 N-linked (GlcNAc...) asparagine glycosylation sites follow: asparagine 31, asparagine 95, asparagine 110, and asparagine 213. Residue serine 225 is part of the active site. Residues asparagine 244, asparagine 328, and asparagine 382 are each glycosylated (N-linked (GlcNAc...) asparagine). Aspartate 417 is an active-site residue. An N-linked (GlcNAc...) asparagine glycan is attached at asparagine 468. Residue histidine 479 is part of the active site. N-linked (GlcNAc...) asparagine glycosylation occurs at asparagine 499. The helical transmembrane segment at 530–550 (ITVGGCAFGFLVGGLIIYIIM) threads the bilayer. Topologically, residues 551-563 (KKSSKNGYYKVIQ) are cytoplasmic.

It belongs to the peptidase S10 family.

The protein resides in the membrane. Its function is as follows. Probable carboxypeptidase. In Dictyostelium discoideum (Social amoeba), this protein is Serine carboxypeptidase S10 family member 2.